An 891-amino-acid polypeptide reads, in one-letter code: Extended synaptotagmin-3 (891 aa).

A disordered region spans residues 1 to 30 (MQPEEPCAPSAPGGPDVPERGQRSRDPGPR). The Cytoplasmic portion of the chain corresponds to 1–32 (MQPEEPCAPSAPGGPDVPERGQRSRDPGPRLS). The span at 17–28 (VPERGQRSRDPG) shows a compositional bias: basic and acidic residues. A helical transmembrane segment spans residues 33-53 (GQLLPELYSFVARVLFYLAPV). Position 54 (tyrosine 54) is a topological domain, lumenal. A helical membrane pass occupies residues 55–75 (LAGYLGLSVTWLLLGALLWMW). Over 76–891 (WRRNRRGKLG…ELTADGQPRS (816 aa)) the chain is Cytoplasmic. The region spanning 118–295 (DVERVEWANK…LPNRVTVPVK (178 aa)) is the SMP-LTD domain. 2 C2 domains span residues 292–412 (VPVK…DEWF) and 430–570 (SLLT…QLDH). 9 residues coordinate Ca(2+): lysine 325, aspartate 326, aspartate 336, aspartate 383, glutamate 384, aspartate 385, aspartate 387, aspartate 389, and aspartate 390. The segment at 652–711 (SAATTDPEPMPEPQGPGPEPKGKDSARGLCESPGKKKNPATTFLTVPGLHSPGPIKSPRP) is disordered. The span at 659 to 670 (EPMPEPQGPGPE) shows a compositional bias: pro residues. Positions 759–881 (RLGEIQLTVR…DLIKGFSQWY (123 aa)) constitute a C2 3 domain. The segment at 806–813 (RRWASRKK) is required for phosphatidylinositol 4,5-bisphosphate-dependent location at the cell membrane.

This sequence belongs to the extended synaptotagmin family.

The protein resides in the cell membrane. Its subcellular location is the endoplasmic reticulum membrane. In terms of biological role, tethers the endoplasmic reticulum to the cell membrane and promotes the formation of appositions between the endoplasmic reticulum and the cell membrane. Binds glycerophospholipids in a barrel-like domain and may play a role in cellular lipid transport. The sequence is that of Extended synaptotagmin-3 (Esyt3) from Mus musculus (Mouse).